Consider the following 429-residue polypeptide: Phenylalanine--tRNA ligase, chloroplastic/mitochondrial (429 aa).

The transit peptide at 1 to 53 (MTVFSVQSTIFSRASVALLSSNGFKRFSFVSSFSSSAAYSPPKMRKRRYPIVS) directs the protein to the chloroplast and mitochondrion. The residue at position 54 (Ala54) is an N-acetylalanine. Residues 163 to 166 (SAHQ), Arg185, 192 to 194 (THY), 199 to 201 (QME), Glu269, and Phe294 contribute to the substrate site. An FDX-ACB domain is found at 338 to 429 (SKYPPCYKDI…VQKKLNVELR (92 aa)).

This sequence belongs to the class-II aminoacyl-tRNA synthetase family. Monomer.

The protein localises to the plastid. Its subcellular location is the chloroplast stroma. The protein resides in the mitochondrion matrix. It catalyses the reaction tRNA(Phe) + L-phenylalanine + ATP = L-phenylalanyl-tRNA(Phe) + AMP + diphosphate + H(+). Functionally, is responsible for the charging of tRNA(Phe) with phenylalanine in mitochondrial translation. This chain is Phenylalanine--tRNA ligase, chloroplastic/mitochondrial, found in Arabidopsis thaliana (Mouse-ear cress).